The chain runs to 3010 residues: Genome polyprotein (3010 aa).

Serine 2 bears the N-acetylserine; by host mark. Residues serine 2–lysine 23 form an interaction with STAT1 region. The segment at serine 2–proline 58 is interaction with EIF2AK2/PKR. The interaction with DDX3X stretch occupies residues serine 2–arginine 59. The tract at residues serine 2–alanine 75 is disordered. The Cytoplasmic segment spans residues serine 2–asparagine 168. 2 consecutive short sequence motifs (nuclear localization signal) follow at residues proline 5–arginine 13 and proline 38–arginine 43. The segment covering proline 7 to asparagine 16 has biased composition (basic residues). Residues glycine 32 to arginine 47 show a composition bias toward low complexity. Residue serine 53 is modified to Phosphoserine; by host. Short sequence motifs (nuclear localization signal) lie at residues proline 58–proline 64 and proline 66–proline 71. Basic residues predominate over residues proline 58–alanine 68. Serine 99 bears the Phosphoserine; by host mark. Residues proline 112 to alanine 152 form an important for endoplasmic reticulum and mitochondrial localization region. A Phosphoserine; by host PKA modification is found at serine 116. Residues valine 122–serine 173 form an interaction with APOA2 region. Positions tyrosine 164–glycine 167 are important for lipid droplets localization. Residues leucine 169–alanine 189 traverse the membrane as a helical segment. A propeptide spans leucine 178 to alanine 191 (ER anchor for the core protein, removed in mature form by host signal peptidase). Residues serine 190–glycine 358 are Lumenal-facing. N-linked (GlcNAc...) asparagine; by host glycans are attached at residues asparagine 196, asparagine 209, asparagine 234, and asparagine 250. The segment at leucine 265–arginine 296 is important for fusion. Asparagine 305 carries N-linked (GlcNAc...) asparagine; by host glycosylation. A helical membrane pass occupies residues leucine 359–alanine 379. At glycine 380–leucine 725 the chain is on the lumenal side. An HVR1 region spans residues threonine 385–isoleucine 411. Residues asparagine 417, asparagine 423, asparagine 430, and asparagine 448 are each glycosylated (N-linked (GlcNAc...) (high mannose) asparagine; by host). Intrachain disulfides connect cysteine 429/cysteine 552, cysteine 452/cysteine 459, cysteine 486/cysteine 494, and cysteine 503/cysteine 508. The tract at residues tyrosine 474–serine 479 is HVR2. An N-linked (GlcNAc...) asparagine; by host glycan is attached at asparagine 478. Residues serine 480–proline 493 are CD81-binding 1. N-linked (GlcNAc...) (high mannose) asparagine; by host glycosylation is present at asparagine 532. Asparagine 540 is a glycosylation site (N-linked (GlcNAc...) asparagine; by host). A CD81-binding 2 region spans residues proline 544–glycine 551. Residue asparagine 556 is glycosylated (N-linked (GlcNAc...) (high mannose) asparagine; by host). An intrachain disulfide couples cysteine 564 to cysteine 569. A glycan (N-linked (GlcNAc...) (high mannose) asparagine; by host) is linked at asparagine 576. 3 disulfides stabilise this stretch: cysteine 581–cysteine 585, cysteine 597–cysteine 620, and cysteine 607–cysteine 644. Asparagine 623 and asparagine 645 each carry an N-linked (GlcNAc...) (high mannose) asparagine; by host glycan. Cysteine 652 and cysteine 677 are oxidised to a cystine. The tract at residues serine 660 to glutamate 671 is PKR/eIF2-alpha phosphorylation homology domain (PePHD). The chain crosses the membrane as a helical span at residues leucine 726–alanine 746. The Lumenal segment spans residues alanine 747–alanine 757. Residues serine 758–isoleucine 778 traverse the membrane as a helical segment. The Cytoplasmic portion of the chain corresponds to lysine 779–arginine 781. The helical transmembrane segment at leucine 782–leucine 803 threads the bilayer. Residues proline 804–glutamate 813 lie on the Lumenal side of the membrane. A helical transmembrane segment spans residues methionine 814 to tyrosine 834. The Cytoplasmic portion of the chain corresponds to tyrosine 835–phenylalanine 838. Residues leucine 839–valine 859 form a helical membrane-spanning segment. At tryptophan 860–histidine 881 the chain is on the lumenal side. A helical transmembrane segment spans residues proline 882–leucine 902. The region spanning glutamine 903–leucine 1026 is the Peptidase C18 domain. Residues glutamine 903 to threonine 1657 are Cytoplasmic-facing. The tract at residues alanine 904–arginine 1206 is protease NS2-3. Cysteine 922 carries the S-palmitoyl cysteine; by host lipid modification. Residues alanine 929–valine 949 form an interaction with host SCPS1 region. Catalysis depends on for protease NS2 activity; shared with dimeric partner residues histidine 952, glutamate 972, and cysteine 993. In terms of domain architecture, Peptidase S29 spans alanine 1027 to proline 1208. Active-site charge relay system; for serine protease NS3 activity residues include histidine 1083 and aspartate 1107. Cysteine 1123 and cysteine 1125 together coordinate Zn(2+). The Charge relay system; for serine protease NS3 activity role is filled by serine 1165. Zn(2+) is bound by residues cysteine 1171 and histidine 1175. A Helicase ATP-binding domain is found at proline 1217–asparagine 1369. Alanine 1230 to serine 1237 is a binding site for ATP. Serine 1237 and glutamate 1317 together coordinate Mg(2+). A DECH box motif is present at residues aspartate 1316 to histidine 1319. The segment at glutamine 1486–glycine 1497 is RNA-binding. A helical transmembrane segment spans residues serine 1658–glycine 1678. The segment at serine 1679–glycine 1690 is NS3-binding. Residues serine 1679 to asparagine 1805 are Cytoplasmic-facing. The chain crosses the membrane as a helical span at residues threonine 1806 to serine 1824. Topologically, residues alanine 1825–alanine 1828 are lumenal. Residues phenylalanine 1829–valine 1849 form a helical membrane-spanning segment. Position 1850 (aspartate 1850) is a topological domain, cytoplasmic. Residues isoleucine 1851 to glycine 1871 traverse the membrane as a helical segment. Over glutamate 1872–asparagine 1881 the chain is Lumenal. Residues leucine 1882–leucine 1902 form a helical membrane-spanning segment. Topologically, residues arginine 1903 to cysteine 1972 are cytoplasmic. S-palmitoyl cysteine; by host attachment occurs at residues cysteine 1968 and cysteine 1972. An intramembrane segment occupies serine 1973–arginine 2002. Residues leucine 2003–arginine 2989 are Cytoplasmic-facing. Zn(2+) contacts are provided by cysteine 2011, cysteine 2029, cysteine 2031, and cysteine 2052. An FKBP8-binding region spans residues glutamate 2120–alanine 2208. The transcriptional activation stretch occupies residues glutamate 2120–threonine 2332. The interaction with non-structural protein 4A stretch occupies residues proline 2135–proline 2139. The tract at residues lysine 2187–histidine 2219 is disordered. The tract at residues arginine 2189 to proline 2441 is interaction with host SKP2. Phosphoserine; by host; in p56 is present on serine 2194. The span at serine 2194–leucine 2211 shows a compositional bias: low complexity. Phosphoserine; by host; in p58 occurs at positions 2197, 2201, 2204, 2207, and 2210. The tract at residues serine 2210 to lysine 2249 is ISDR. Residues serine 2210–leucine 2275 are interaction with EIF2AK2/PKR. The tract at residues lysine 2249–tyrosine 2306 is NS4B-binding. Positions proline 2322–proline 2325 match the SH3-binding motif. The short motif at proline 2326 to valine 2334 is the Nuclear localization signal element. Residue lysine 2350 forms a Glycyl lysine isopeptide (Lys-Gly) (interchain with G-Cter in ubiquitin) linkage. Positions threonine 2351–alanine 2365 are enriched in polar residues. Residues threonine 2351–threonine 2407 form a disordered region. Positions serine 2354 to aspartate 2377 are V3. 2 positions are modified to phosphoserine; by host: serine 2448 and serine 2461. Residues proline 2633 to aspartate 2751 enclose the RdRp catalytic domain. The Mg(2+) site is built by aspartate 2639, aspartate 2737, and aspartate 2738. A helical membrane pass occupies residues tryptophan 2990–arginine 3010.

The protein belongs to the hepacivirus polyprotein family. As to quaternary structure, homooligomer. Interacts with E1 (via C-terminus). Interacts with the non-structural protein 5A. Interacts (via N-terminus) with host STAT1 (via SH2 domain); this interaction results in decreased STAT1 phosphorylation and ubiquitin-mediated proteasome-dependent STAT1 degradation, leading to decreased IFN-stimulated gene transcription. Interacts with host STAT3; this interaction constitutively activates STAT3. Interacts with host LTBR receptor. Interacts with host TNFRSF1A receptor and possibly induces apoptosis. Interacts with host HNRPK. Interacts with host YWHAE. Interacts with host UBE3A/E6AP. Interacts with host DDX3X. Interacts with host APOA2. Interacts with host RXRA protein. Interacts with host SP110 isoform 3/Sp110b; this interaction sequesters the transcriptional corepressor SP110 away from the nucleus. Interacts with host CREB3 nuclear transcription protein; this interaction triggers cell transformation. Interacts with host ACY3. Interacts with host C1QR1. Interacts with host RBM24; this interaction, which enhances the interaction of the mature core protein with 5'-UTR, may inhibit viral translation and favor replication. Interacts with host EIF2AK2/PKR; this interaction induces the autophosphorylation of EIF2AK2. Part of the viral assembly initiation complex composed of NS2, E1, E2, NS3, NS4A, NS5A and the mature core protein. In terms of assembly, forms a heterodimer with envelope glycoprotein E2. Interacts with mature core protein. Interacts with protease NS2. The heterodimer E1/E2 interacts with host CLDN1; this interaction plays a role in viral entry into host cell. Interacts with host SPSB2 (via C-terminus). Part of the viral assembly initiation complex composed of NS2, E1, E2, NS3, NS4A, NS5A and the mature core protein. Interacts with host NEURL3; this interaction prevents E1 binding to glycoprotein E2. Forms a heterodimer with envelope glycoprotein E1. Interacts with host CD81 and SCARB1 receptors; these interactions play a role in viral entry into host cell. Interacts with host EIF2AK2/PKR; this interaction inhibits EIF2AK2 and probably allows the virus to evade the innate immune response. Interacts with host CD209/DC-SIGN and CLEC4M/DC-SIGNR. Interact with host SPCS1; this interaction is essential for viral particle assembly. Interacts with protease NS2. The heterodimer E1/E2 interacts with host CLDN1; this interaction plays a role in viral entry into host cell. Part of the viral assembly initiation complex composed of NS2, E1, E2, NS3, NS4A, NS5A and the mature core protein. Interacts with host SLC3A2/4F2hc; the interaction may facilitate viral entry into host cell. Interacts with human PLSCR1. As to quaternary structure, homohexamer. Homoheptamer. Interacts with protease NS2. In terms of assembly, homodimer. Interacts with host SPCS1; this interaction is essential for viral particle assembly. Interacts with envelope glycoprotein E1. Interacts with envelope glycoprotein E2. Interacts with viroporin p7. Interacts with serine protease/helicase NS3. Part of the replication complex composed of NS2, NS3, NS4A, NS4B, NS5A and the RNA-directed RNA polymerase embedded in an ER-derived membranous web. Part of the viral assembly initiation complex composed of NS2, E1, E2, NS3, NS4A, NS5A and the mature core protein. Interacts with protease NS2. Interacts with non-structural protein 4A; this interaction stabilizes the folding of NS3 serine protease. NS3-NS4A interaction is essential for NS3 activation and allows membrane anchorage of the latter. NS3/NS4A complex also prevents phosphorylation of host IRF3, thus preventing the establishment of dsRNA induced antiviral state. Interacts with host MAVS; this interaction leads to the cleavage and inhibition of host MAVS. Interacts with host TICAM1; this interaction leads to the cleavage and inhibition of host TICAM1. Interacts with host TANK-binding kinase/TBK1; this interaction results in the inhibition of the association between TBK1 and IRF3, which leads to the inhibition of IRF3 activation. Interacts with host RBM24. Part of the replication complex composed of NS2, NS3, NS4A, NS4B, NS5A and the RNA-directed RNA polymerase embedded in an ER-derived membranous web. Part of the viral assembly initiation complex composed of NS2, E1, E2, NS3, NS4A, NS5A and the mature core protein. As to quaternary structure, interacts with NS3 serine protease; this interaction stabilizes the folding of NS3 serine protease. NS3-NS4A interaction is essential for NS3 activation and allows membrane anchorage of the latter. Interacts with non-structural protein 5A (via N-terminus). Part of the replication complex composed of NS2, NS3, NS4A, NS4B, NS5A and the RNA-directed RNA polymerase embedded in an ER-derived membranous web. Part of the viral assembly initiation complex composed of NS2, E1, E2, NS3, NS4A, NS5A and the mature core protein. In terms of assembly, homomultimer. Interacts with non-structural protein NS5A. Interacts with host PLA2G4C; this interaction likely initiates the recruitment of replication complexes to lipid droplets. Interacts with host STING; this interaction disrupts the interaction between STING and TBK1 thereby suppressing the interferon signaling. Part of the replication complex composed of NS2, NS3, NS4A, NS4B, NS5A and the RNA-directed RNA polymerase embedded in an ER-derived membranous web. Monomer. Homodimer; dimerization is required for RNA-binding. Interacts with the mature core protein. Interacts (via N-terminus) with non-structural protein 4A. Interacts with non-structural protein 4B. Interacts (via region D2) with RNA-directed RNA polymerase. Part of the viral assembly initiation complex composed of NS2, E1, E2, NS3, NS4A, NS5A and the mature core protein. Part of the replication complex composed of NS2, NS3, NS4A, NS4B, NS5A and the RNA-directed RNA polymerase embedded in an ER-derived membranous web. Interacts with host GRB2. Interacts with host BIN1. Interacts with host PIK3R1. Interacts with host SRCAP. Interacts with host FKBP8. Interacts (via C-terminus) with host VAPB (via MSP domain). Interacts with host EIF2AK2/PKR; this interaction leads to disruption of EIF2AK2 dimerization by NS5A and probably allows the virus to evade the innate immune response. Interacts (via N-terminus) with host PACSIN2 (via N-terminus); this interaction attenuates protein kinase C alpha-mediated phosphorylation of PACSIN2 by disrupting the interaction between PACSIN2 and PRKCA. Interacts (via N-terminus) with host SRC kinase (via SH2 domain). Interacts with most Src-family kinases. Interacts with host IFI27 and SKP2; promotes the ubiquitin-mediated proteasomal degradation of NS5A. Interacts with host GPS2. Interacts with host TNFRSF21; this interaction allows the modulation by the virus of JNK, p38 MAPK, STAT3, and Akt signaling pathways in a DR6-dependent manner. Interacts (via N-terminus) with host CIDEB (via N-terminus); this interaction seems to regulate the association of HCV particles with APOE. Interacts with host CHKA/Choline Kinase-alpha; CHKA bridges host PI4KA and NS5A and potentiates NS5A-stimulated PI4KA activity, which then facilitates the targeting of the ternary complex to the ER for viral replication. Interacts with host SPSB2 (via C-terminus); this interaction targets NS5A for ubiquitination and degradation. Interacts with host RAB18; this interaction may promote the association of NS5A and other replicase components with lipid droplets. Interacts (via region D2) with host PPIA/CYPA; the interaction stimulates RNA-binding ability of NS5A and is dependent on the peptidyl-prolyl cis-trans isomerase activity of PPIA/CYPA. Interacts with host TRIM14; this interaction induces the degradation of NS5A. As to quaternary structure, homooligomer. Interacts with non-structural protein 5A. Interacts with host VAPB. Interacts with host PRK2/PKN2. Interacts with host HNRNPA1 and SEPT6; these interactions facilitate viral replication. Part of the replication complex composed of NS2, NS3, NS4A, NS4B, NS5A and the RNA-directed RNA polymerase. Zn(2+) serves as cofactor. The cofactor is Mg(2+). Post-translationally, specific enzymatic cleavages in vivo yield mature proteins. The structural proteins, core, E1, E2 and p7 are produced by proteolytic processing by host signal peptidases. The core protein precursor is synthesized as a 23 kDa, which is retained in the ER membrane through the hydrophobic signal peptide. Cleavage by the signal peptidase releases the 21 kDa mature core protein. The cleavage of the core protein precursor occurs between aminoacids 176 and 188 but the exact cleavage site is not known. Some degraded forms of the core protein appear as well during the course of infection. The other proteins (p7, NS2, NS3, NS4A, NS4B, NS5A and NS5B) are cleaved by the viral proteases. Autoprocessing between NS2 and NS3 is mediated by the NS2 cysteine protease catalytic domain and regulated by the NS3 N-terminal domain. Phosphorylated by host PKC and PKA. In terms of processing, ubiquitinated; mediated by UBE3A and leading to core protein subsequent proteasomal degradation. Post-translationally, highly N-glycosylated. Palmitoylation is required for NS2/3 autoprocessing and E2 recruitment to membranes. In terms of processing, palmitoylated. This modification may play a role in its polymerization or in protein-protein interactions. Post-translationally, phosphorylated on serines in a basal form termed p56. p58 is a hyperphosphorylated form of p56. p56 and p58 coexist in the cell in roughly equivalent amounts. Hyperphosphorylation is dependent on the presence of NS4A. Host CSNK1A1/CKI-alpha or RPS6KB1 kinases may be responsible for NS5A phosphorylation. Tyrosine phosphorylation is essential for the interaction with host SRC. In terms of processing, the N-terminus is phosphorylated by host PRK2/PKN2.

The protein resides in the host endoplasmic reticulum membrane. Its subcellular location is the host mitochondrion membrane. The protein localises to the virion. It localises to the host cytoplasm. It is found in the host nucleus. The protein resides in the host lipid droplet. Its subcellular location is the virion membrane. The protein localises to the host mitochondrion. It localises to the host cell membrane. It is found in the host perinuclear region. The catalysed reaction is Hydrolysis of four peptide bonds in the viral precursor polyprotein, commonly with Asp or Glu in the P6 position, Cys or Thr in P1 and Ser or Ala in P1'.. The enzyme catalyses a ribonucleoside 5'-triphosphate + H2O = a ribonucleoside 5'-diphosphate + phosphate + H(+). It catalyses the reaction ATP + H2O = ADP + phosphate + H(+). It carries out the reaction RNA(n) + a ribonucleoside 5'-triphosphate = RNA(n+1) + diphosphate. Inhibited by the antiviral drug hexamethylene amiloride. Inhibited by amantadine. Inhibition by amantadine appears to be genotype-dependent. Also inhibited by long-alkyl-chain iminosugar derivatives. With respect to regulation, activity is up-regulated by PRK2/PKN2-mediated phosphorylation. Packages viral RNA to form a viral nucleocapsid, and promotes virion budding. Participates in the viral particle production as a result of its interaction with the non-structural protein 5A. Binds RNA and may function as a RNA chaperone to induce the RNA structural rearrangements taking place during virus replication. Modulates viral translation initiation by interacting with viral IRES and 40S ribosomal subunit. Affects various cell signaling pathways, host immunity and lipid metabolism. Prevents the establishment of cellular antiviral state by blocking the interferon-alpha/beta (IFN-alpha/beta) and IFN-gamma signaling pathways and by blocking the formation of phosphorylated STAT1 and promoting ubiquitin-mediated proteasome-dependent degradation of STAT1. Activates STAT3 leading to cellular transformation. Regulates the activity of cellular genes, including c-myc and c-fos. May repress the promoter of p53, and sequester CREB3 and SP110 isoform 3/Sp110b in the cytoplasm. Represses cell cycle negative regulating factor CDKN1A, thereby interrupting an important check point of normal cell cycle regulation. Targets transcription factors involved in the regulation of inflammatory responses and in the immune response: suppresses TNF-induced NF-kappa-B activation, and activates AP-1. Binds to dendritic cells (DCs) via C1QR1, resulting in down-regulation of T-lymphocytes proliferation. Alters lipid metabolism by interacting with hepatocellular proteins involved in lipid accumulation and storage. Induces up-regulation of FAS promoter activity, and thereby contributes to the increased triglyceride accumulation in hepatocytes (steatosis). Functionally, forms a heterodimer with envelope glycoprotein E2, which mediates virus attachment to the host cell, virion internalization through clathrin-dependent endocytosis and fusion with host membrane. Fusion with the host cell is most likely mediated by both E1 and E2, through conformational rearrangements of the heterodimer required for fusion rather than a classical class II fusion mechanism. E1/E2 heterodimer binds host apolipoproteins such as APOB and APOE thereby forming a lipo-viro-particle (LVP). APOE associated to the LVP allows the initial virus attachment to cell surface receptors such as the heparan sulfate proteoglycans (HSPGs), syndecan-1 (SDC1), syndecan-1 (SDC2), the low-density lipoprotein receptor (LDLR) and scavenger receptor class B type I (SCARB1). The cholesterol transfer activity of SCARB1 allows E2 exposure and binding of E2 to SCARB1 and the tetraspanin CD81. E1/E2 heterodimer binding on CD81 activates the epithelial growth factor receptor (EGFR) signaling pathway. Diffusion of the complex E1-E2-EGFR-SCARB1-CD81 to the cell lateral membrane allows further interaction with Claudin 1 (CLDN1) and occludin (OCLN) to finally trigger HCV entry. In terms of biological role, forms a heterodimer with envelope glycoprotein E1, which mediates virus attachment to the host cell, virion internalization through clathrin-dependent endocytosis and fusion with host membrane. Fusion with the host cell is most likely mediated by both E1 and E2, through conformational rearrangements of the heterodimer required for fusion rather than a classical class II fusion mechanism. The interaction between envelope glycoprotein E2 and host apolipoprotein E/APOE allows the proper assembly, maturation and infectivity of the viral particles. This interaction is probably promoted via the up-regulation of cellular autophagy by the virus. E1/E2 heterodimer binds host apolipoproteins such as APOB and APOE thereby forming a lipo-viro-particle (LVP). APOE associated to the LVP allows the initial virus attachment to cell surface receptors such as the heparan sulfate proteoglycans (HSPGs), syndecan-1 (SDC1), syndecan-1 (SDC2), the low-density lipoprotein receptor (LDLR) and scavenger receptor class B type I (SCARB1). The cholesterol transfer activity of SCARB1 allows E2 exposure and binding of E2 to SCARB1 and the tetraspanin CD81. E1/E2 heterodimer binding on CD81 activates the epithelial growth factor receptor (EGFR) signaling pathway. Diffusion of the complex E1-E2-EGFR-SCARB1-CD81 to the cell lateral membrane allows further interaction with Claudin 1 (CLDN1) and occludin (OCLN) to finally trigger HCV entry. Inhibits host EIF2AK2/PKR activation, preventing the establishment of an antiviral state. Viral ligand for CD209/DC-SIGN and CLEC4M/DC-SIGNR, which are respectively found on dendritic cells (DCs), and on liver sinusoidal endothelial cells and macrophage-like cells of lymph node sinuses. These interactions allow the capture of circulating HCV particles by these cells and subsequent transmission to permissive cells. Capture of circulating HCV particles by these SIGN+ cells may facilitate virus infection of proximal hepatocytes and lymphocyte subpopulations and may be essential for the establishment of persistent infection. Its function is as follows. Ion channel protein that acts as a viroporin and plays an essential role in the assembly, envelopment and secretion of viral particles. Regulates the host cell secretory pathway, which induces the intracellular retention of viral glycoproteins and favors assembly of viral particles. Creates a pore in acidic organelles and releases Ca(2+) and H(+) in the cytoplasm of infected cells, leading to a productive viral infection. High levels of cytoplasmic Ca(2+) may trigger membrane trafficking and transport of viral ER-associated proteins to viroplasms, sites of viral genome replication. This ionic imbalance induces the assembly of the inflammasome complex, which triggers the maturation of pro-IL-1beta into IL-1beta through the action of caspase-1. Targets also host mitochondria and induces mitochondrial depolarization. In addition of its role as a viroporin, acts as a lipid raft adhesion factor. Cysteine protease required for the proteolytic auto-cleavage between the non-structural proteins NS2 and NS3. The N-terminus of NS3 is required for the function of NS2 protease (active region NS2-3). Promotes the initiation of viral particle assembly by mediating the interaction between structural and non-structural proteins. Functionally, displays three enzymatic activities: serine protease with a chymotrypsin-like fold, NTPase and RNA helicase. NS3 serine protease, in association with NS4A, is responsible for the cleavages of NS3-NS4A, NS4A-NS4B, NS4B-NS5A and NS5A-NS5B. The NS3/NS4A complex prevents phosphorylation of host IRF3, thus preventing the establishment of dsRNA induced antiviral state. The NS3/NS4A complex induces host amino acid transporter component SLC3A2, thus contributing to HCV propagation. NS3 RNA helicase binds to RNA and unwinds both dsDNA and dsRNA in the 3' to 5' direction, and likely resolves RNA complicated stable secondary structures in the template strand. Binds a single ATP and catalyzes the unzipping of a single base pair of dsRNA. Inhibits host antiviral proteins TBK1 and IRF3 thereby preventing the establishment of an antiviral state. Cleaves host MAVS/CARDIF thereby preventing the establishment of an antiviral state. Cleaves host TICAM1/TRIF, thereby disrupting TLR3 signaling and preventing the establishment of an antiviral state. In terms of biological role, induces a specific membrane alteration that serves as a scaffold for the virus replication complex. This membrane alteration gives rise to the so-called ER-derived membranous web that contains the replication complex. NS4B self-interaction contributes to its function in membranous web formation. Promotes host TRIF protein degradation in a CASP8-dependent manner thereby inhibiting host TLR3-mediated interferon signaling. Disrupts the interaction between STING and TBK1 contributing to the inhibition of interferon signaling. Its function is as follows. Phosphorylated protein that is indispensable for viral replication and assembly. Both hypo- and hyperphosphorylated states are required for the viral life cycle. The hyperphosphorylated form of NS5A is an inhibitor of viral replication. Involved in RNA-binding and especially in binding to the viral genome. Zinc is essential for RNA-binding. Participates in the viral particle production as a result of its interaction with the mature viral core protein. Its interaction with host VAPB may target the viral replication complex to vesicles. Down-regulates viral IRES translation initiation. Mediates interferon resistance, presumably by interacting with and inhibiting host EIF2AK2/PKR. Prevents BIN1-induced apoptosis. Acts as a transcriptional activator of some host genes important for viral replication when localized in the nucleus. Via the interaction with host PACSIN2, modulates lipid droplet formation in order to promote virion assembly. Modulates TNFRSF21/DR6 signaling pathway for viral propagation. RNA-dependent RNA polymerase that performs primer-template recognition and RNA synthesis during viral replication. Initiates RNA transcription/replication at a flavin adenine dinucleotide (FAD), resulting in a 5'- FAD cap on viral RNAs. In this way, recognition of viral 5' RNA by host pattern recognition receptors can be bypassed, thereby evading activation of antiviral pathways. This chain is Genome polyprotein, found in Hepatitis C virus genotype 1b (strain HC-J4) (HCV).